A 149-amino-acid polypeptide reads, in one-letter code: Pleckstrin homology domain-containing family J member 1 (149 aa).

The region spanning 15–108 is the PH domain; it reads RAEKAAELSM…WVEALTNASY (94 aa).

The protein is Pleckstrin homology domain-containing family J member 1 (plekhj1) of Xenopus tropicalis (Western clawed frog).